Here is a 147-residue protein sequence, read N- to C-terminus: Large ribosomal subunit protein uL22 (147 aa).

It belongs to the universal ribosomal protein uL22 family. In terms of assembly, part of the 50S ribosomal subunit.

Its function is as follows. This protein binds specifically to 23S rRNA; its binding is stimulated by other ribosomal proteins, e.g. L4, L17, and L20. It is important during the early stages of 50S assembly. It makes multiple contacts with different domains of the 23S rRNA in the assembled 50S subunit and ribosome. In terms of biological role, the globular domain of the protein is located near the polypeptide exit tunnel on the outside of the subunit, while an extended beta-hairpin is found that lines the wall of the exit tunnel in the center of the 70S ribosome. The sequence is that of Large ribosomal subunit protein uL22 from Fervidobacterium nodosum (strain ATCC 35602 / DSM 5306 / Rt17-B1).